A 340-amino-acid polypeptide reads, in one-letter code: Anthranilate phosphoribosyltransferase (340 aa).

Residues Gly-78, 81 to 82, Thr-86, 88 to 91, 106 to 114, and Ser-118 each bind 5-phospho-alpha-D-ribose 1-diphosphate; these read GD, NIST, and KHGNRSVSS. Position 78 (Gly-78) interacts with anthranilate. Ser-90 is a binding site for Mg(2+). An anthranilate-binding site is contributed by Asn-109. Arg-164 contacts anthranilate. 2 residues coordinate Mg(2+): Asp-223 and Glu-224.

It belongs to the anthranilate phosphoribosyltransferase family. As to quaternary structure, homodimer. Requires Mg(2+) as cofactor.

The enzyme catalyses N-(5-phospho-beta-D-ribosyl)anthranilate + diphosphate = 5-phospho-alpha-D-ribose 1-diphosphate + anthranilate. The protein operates within amino-acid biosynthesis; L-tryptophan biosynthesis; L-tryptophan from chorismate: step 2/5. Catalyzes the transfer of the phosphoribosyl group of 5-phosphorylribose-1-pyrophosphate (PRPP) to anthranilate to yield N-(5'-phosphoribosyl)-anthranilate (PRA). In Bacillus pumilus (strain SAFR-032), this protein is Anthranilate phosphoribosyltransferase.